Here is a 514-residue protein sequence, read N- to C-terminus: 2-isopropylmalate synthase (514 aa).

The Pyruvate carboxyltransferase domain maps to 5–267 (LIIFDTTLRD…HTDIETREIV (263 aa)). Mn(2+) contacts are provided by D14, H202, H204, and N238. The tract at residues 393–514 (KLVALRVCSE…QRTHPQVGDV (122 aa)) is regulatory domain.

It belongs to the alpha-IPM synthase/homocitrate synthase family. LeuA type 1 subfamily. In terms of assembly, homodimer. It depends on Mn(2+) as a cofactor.

Its subcellular location is the cytoplasm. It catalyses the reaction 3-methyl-2-oxobutanoate + acetyl-CoA + H2O = (2S)-2-isopropylmalate + CoA + H(+). It functions in the pathway amino-acid biosynthesis; L-leucine biosynthesis; L-leucine from 3-methyl-2-oxobutanoate: step 1/4. Functionally, catalyzes the condensation of the acetyl group of acetyl-CoA with 3-methyl-2-oxobutanoate (2-ketoisovalerate) to form 3-carboxy-3-hydroxy-4-methylpentanoate (2-isopropylmalate). This is 2-isopropylmalate synthase from Methylococcus capsulatus (strain ATCC 33009 / NCIMB 11132 / Bath).